Reading from the N-terminus, the 287-residue chain is Acetyl-coenzyme A carboxylase carboxyl transferase subunit beta (287 aa).

The region spanning 36–287 (MWVKCDRCGK…KVLYKILELH (252 aa)) is the CoA carboxyltransferase N-terminal domain. Zn(2+) contacts are provided by cysteine 40, cysteine 43, cysteine 59, and cysteine 62. A C4-type zinc finger spans residues 40–62 (CDRCGKTLYKKDLDENLKVCKFC).

This sequence belongs to the AccD/PCCB family. As to quaternary structure, acetyl-CoA carboxylase is a heterohexamer composed of biotin carboxyl carrier protein (AccB), biotin carboxylase (AccC) and two subunits each of ACCase subunit alpha (AccA) and ACCase subunit beta (AccD). Zn(2+) serves as cofactor.

It localises to the cytoplasm. It catalyses the reaction N(6)-carboxybiotinyl-L-lysyl-[protein] + acetyl-CoA = N(6)-biotinyl-L-lysyl-[protein] + malonyl-CoA. The protein operates within lipid metabolism; malonyl-CoA biosynthesis; malonyl-CoA from acetyl-CoA: step 1/1. In terms of biological role, component of the acetyl coenzyme A carboxylase (ACC) complex. Biotin carboxylase (BC) catalyzes the carboxylation of biotin on its carrier protein (BCCP) and then the CO(2) group is transferred by the transcarboxylase to acetyl-CoA to form malonyl-CoA. The polypeptide is Acetyl-coenzyme A carboxylase carboxyl transferase subunit beta (Clostridium novyi (strain NT)).